A 202-amino-acid polypeptide reads, in one-letter code: uncharacterized protein (202 aa).

This is an uncharacterized protein from Archaeoglobus fulgidus (strain ATCC 49558 / DSM 4304 / JCM 9628 / NBRC 100126 / VC-16).